Here is a 303-residue protein sequence, read N- to C-terminus: tRNA-cytidine(32) 2-sulfurtransferase (303 aa).

A PP-loop motif motif is present at residues serine 45–serine 50. Residues cysteine 120, cysteine 123, and cysteine 211 each coordinate [4Fe-4S] cluster.

Belongs to the TtcA family. Homodimer. The cofactor is Mg(2+). [4Fe-4S] cluster is required as a cofactor.

It localises to the cytoplasm. The catalysed reaction is cytidine(32) in tRNA + S-sulfanyl-L-cysteinyl-[cysteine desulfurase] + AH2 + ATP = 2-thiocytidine(32) in tRNA + L-cysteinyl-[cysteine desulfurase] + A + AMP + diphosphate + H(+). The protein operates within tRNA modification. Its function is as follows. Catalyzes the ATP-dependent 2-thiolation of cytidine in position 32 of tRNA, to form 2-thiocytidine (s(2)C32). The sulfur atoms are provided by the cysteine/cysteine desulfurase (IscS) system. The protein is tRNA-cytidine(32) 2-sulfurtransferase of Methylobacillus flagellatus (strain ATCC 51484 / DSM 6875 / VKM B-1610 / KT).